The primary structure comprises 114 residues: WQMIVEHKCCVIVMLAREIEAGKKKCEKYWPDAGKQLRFGGISVENRQEVNYSAFRRRVFSVVSEKQEQLTVYQYQFLKWPDHGVPQTTSNLFRMHRAVLKSCQELGNDNPIVV.

Residues 1-114 (WQMIVEHKCC…ELGNDNPIVV (114 aa)) enclose the Tyrosine-protein phosphatase domain. Asp82 is a binding site for substrate.

It belongs to the protein-tyrosine phosphatase family.

The enzyme catalyses O-phospho-L-tyrosyl-[protein] + H2O = L-tyrosyl-[protein] + phosphate. This Styela plicata (Wrinkled sea squirt) protein is Tyrosine-protein phosphatase 27 (STY-27).